A 47-amino-acid chain; its full sequence is MFDAVSDLVNAFTSINWEVIFQLLSVALIVIAGPVVIFLLAFRNGNL.

Residues Val19 to Leu39 form a helical membrane-spanning segment.

Belongs to the Psb30/Ycf12 family. As to quaternary structure, PSII is composed of 1 copy each of membrane proteins PsbA, PsbB, PsbC, PsbD, PsbE, PsbF, PsbH, PsbI, PsbJ, PsbK, PsbL, PsbM, PsbT, PsbX, PsbY, PsbZ, Psb30/Ycf12, peripheral proteins PsbO, CyanoQ (PsbQ), PsbU, PsbV and a large number of cofactors. It forms dimeric complexes.

It is found in the cellular thylakoid membrane. In terms of biological role, a core subunit of photosystem II (PSII), probably helps stabilize the reaction center. This is Photosystem II reaction center protein Psb30 from Nostoc punctiforme (strain ATCC 29133 / PCC 73102).